We begin with the raw amino-acid sequence, 839 residues long: MDFVVDYQTYAMADTAAPELPEPEPRLNLTSDAQSQPTGILDLQFKLPDLQRYSNNNATLPVDNDGAGSKDLHKKMTHYAMSSIDKIQLSNPSKQLGQNSQDEKLSQQESQNFTNYEPKNLDLSKLVSPSSGSNKNTTNLVLSNKLSKILNNYTLINYQATVQLRKSLKVLEENKERLSLDEQKLMNPEYVGTLARRALRTDLESQLLKEHITVLEEFKPIIRRIKRLSSSVEKIQRTSEKLLSNETNEVPTNNVVLQEIDQYRLKAEQLKLKKKILLSIRDRFTLNQVEDDVITNGTIDNIFFEVVKKVINIKDESSFLLTLPNLNAGNALIMGVNEILEKTNKKIFNYLIDFLYSFESSSNLLNDHGTTEQESLNIFRKSLVFLSSDLELFNELLKRVTTLRSKSILDEFLSQFDMNSTTSKPIILSAHDPIRYIGDVLASVHSIIANEADFVKSLFDFQDEDLKDTPISILQQNKTFLKGIDNKLLNDIIQSLSNSCRIRIEQIVRFEENPIINFEIVRLLKLYRVMFERKGIQDDSSIINNLKSLEDISKNRIIGYYEDYMKQTVMAETKNSSDDLLPPEWLSEYMNKLVELFEIYEKTHAAEDEESEDNKLLSSKNLQTIVEQPIKDVLLKQLQTSFPLAKKNEKEKASLLTIEINCFDLIKSRLQPFEGLFAQDDDSRKITIWVCDKLKEYTKQMLTLQIKFLFENTGLDLYSNLVNMIFPVDSVKDELDYDMYLALRDNSLMELDMVRKNVHDKLNYYLPQALTDVQGNLLFKLTSPMIADEICDECFKKLSLFYNIFRKLLIHLYPNKKDQVFEILNFSTDEFDMLIGIDH.

It belongs to the COG6 family.

Its subcellular location is the golgi apparatus membrane. Functionally, acts as a component of the peripheral membrane COG complex that is involved in intra-Golgi protein trafficking. COG is located at the cis-Golgi, and regulates tethering of retrograde intra-Golgi vesicles and possibly a number of other membrane trafficking events. This chain is Conserved oligomeric Golgi complex subunit 6 (COG6), found in Saccharomyces cerevisiae (strain YJM789) (Baker's yeast).